The sequence spans 331 residues: UPF0324 membrane protein SERP0111 (331 aa).

10 helical membrane-spanning segments follow: residues 7–26, 31–48, 69–88, 93–115, 122–144, 154–176, 183–205, 249–271, 275–297, and 308–330; these read ASFM…SYIL, ILHT…AMIY, LLKF…DILG, LLLI…NQII, SILL…APIL, SVGI…EAIF, YGAW…GIGG, IPYF…IPSL, IINV…NIVL, and FIVI…SIMF.

The protein belongs to the UPF0324 family.

The protein localises to the cell membrane. This is UPF0324 membrane protein SERP0111 from Staphylococcus epidermidis (strain ATCC 35984 / DSM 28319 / BCRC 17069 / CCUG 31568 / BM 3577 / RP62A).